The following is a 531-amino-acid chain: Histone-arginine methyltransferase CARMER (531 aa).

An SAM-dependent MTase PRMT-type domain is found at 141–450 (ASQYFQFYGY…QSYDVTIDLH (310 aa)). Residues glutamine 154, arginine 163, glycine 187, glutamate 209, glutamate 238, and threonine 266 each contribute to the S-adenosyl-L-methionine site. Residue arginine 501 is modified to Asymmetric dimethylarginine; by autocatalysis.

The protein belongs to the class I-like SAM-binding methyltransferase superfamily. Protein arginine N-methyltransferase family. As to quaternary structure, homodimer. Post-translationally, the dimethylated protein is the major form.

The protein resides in the cytoplasm. Its subcellular location is the nucleus. The enzyme catalyses L-arginyl-[protein] + 2 S-adenosyl-L-methionine = N(omega),N(omega)-dimethyl-L-arginyl-[protein] + 2 S-adenosyl-L-homocysteine + 2 H(+). Functionally, methylates (mono- and asymmetric dimethylation) the guanidino nitrogens of arginyl residues in proteins. May methylate histone H3 at 'Arg-17' and activate transcription via chromatin remodeling. The protein is Histone-arginine methyltransferase CARMER (Art4) of Drosophila ananassae (Fruit fly).